A 223-amino-acid chain; its full sequence is Urease accessory protein UreF (223 aa).

Belongs to the UreF family. In terms of assembly, ureD, UreF and UreG form a complex that acts as a GTP-hydrolysis-dependent molecular chaperone, activating the urease apoprotein by helping to assemble the nickel containing metallocenter of UreC. The UreE protein probably delivers the nickel.

Its subcellular location is the cytoplasm. Functionally, required for maturation of urease via the functional incorporation of the urease nickel metallocenter. This Rhizobium leguminosarum bv. viciae protein is Urease accessory protein UreF.